We begin with the raw amino-acid sequence, 213 residues long: Kynurenine formamidase (213 aa).

A substrate-binding site is contributed by Trp-18. Residues His-48, His-52, and Asp-54 each contribute to the Zn(2+) site. His-58 serves as the catalytic Proton donor/acceptor. Residues His-160 and Glu-172 each contribute to the Zn(2+) site.

It belongs to the Cyclase 1 superfamily. KynB family. As to quaternary structure, homodimer. Zn(2+) is required as a cofactor.

It carries out the reaction N-formyl-L-kynurenine + H2O = L-kynurenine + formate + H(+). It participates in amino-acid degradation; L-tryptophan degradation via kynurenine pathway; L-kynurenine from L-tryptophan: step 2/2. Functionally, catalyzes the hydrolysis of N-formyl-L-kynurenine to L-kynurenine, the second step in the kynurenine pathway of tryptophan degradation. This chain is Kynurenine formamidase, found in Burkholderia thailandensis (strain ATCC 700388 / DSM 13276 / CCUG 48851 / CIP 106301 / E264).